A 205-amino-acid polypeptide reads, in one-letter code: Ras-related protein Rab-1A (205 aa).

S2 carries the post-translational modification N-acetylserine. GTP is bound by residues S20, G21, G23, K24, S25, C26, E38, and T43. Residue S25 coordinates Mg(2+). The short motif at D34–F48 is the Switch 1 element. T43 is a binding site for Mg(2+). Glycyl lysine isopeptide (Lys-Gly) (interchain with G-Cter in ubiquitin) cross-links involve residues K49 and K61. D66 lines the Mg(2+) pocket. The Switch 2 motif lies at D66 to G83. GTP-binding residues include G69, N124, K125, D127, A155, and K156. Positions P178 to C205 are disordered. The residue at position 194 (S194) is a Phosphoserine; by CDK1. Residues C204 and C205 are each lipidated (S-geranylgeranyl cysteine).

This sequence belongs to the small GTPase superfamily. Rab family. As to quaternary structure, may interact with YIPF5. Interacts with C9orf72; the interaction mediates recruitment of RAB1A to the ATG1/ULK1 kinase complex. Interacts with GDI1; this promotes dissociation from membranes. The cofactor is Mg(2+). Phosphorylated by CDK1 kinase during mitosis. In terms of processing, ubiquitinated via 'Lys-11'-linked ubiquitination on Lys-49 and Lys-61; impairing the recruitment of guanosine diphosphate (GDP) dissociation inhibitor 1/GDI1.

The protein localises to the golgi apparatus. Its subcellular location is the endoplasmic reticulum. The protein resides in the early endosome. It localises to the cytoplasm. It is found in the cytosol. The protein localises to the membrane. Its subcellular location is the melanosome. The catalysed reaction is GTP + H2O = GDP + phosphate + H(+). With respect to regulation, regulated by guanine nucleotide exchange factors (GEFs) which promote the exchange of bound GDP for free GTP. Regulated by GTPase activating proteins (GAPs) which increase the GTP hydrolysis activity. Inhibited by GDP dissociation inhibitors (GDIs). Its function is as follows. The small GTPases Rab are key regulators of intracellular membrane trafficking, from the formation of transport vesicles to their fusion with membranes. Rabs cycle between an inactive GDP-bound form and an active GTP-bound form that is able to recruit to membranes different sets of downstream effectors directly responsible for vesicle formation, movement, tethering and fusion. RAB1A regulates vesicular protein transport from the endoplasmic reticulum (ER) to the Golgi compartment and on to the cell surface, and plays a role in IL-8 and growth hormone secretion. Required to modulate the compacted morphology of the Golgi. Regulates the level of CASR present at the cell membrane. Plays a role in cell adhesion and cell migration, via its role in protein trafficking. Plays a role in autophagosome assembly and cellular defense reactions against pathogenic bacteria. Plays a role in microtubule-dependent protein transport by early endosomes and in anterograde melanosome transport. This is Ras-related protein Rab-1A (RAB1A) from Sus scrofa (Pig).